The sequence spans 137 residues: Large ribosomal subunit protein uL16c (137 aa).

The disordered stretch occupies residues 1–21 (MLSPKKTKYRKQHRGRMKGKA).

It belongs to the universal ribosomal protein uL16 family. In terms of assembly, part of the 50S ribosomal subunit.

The protein localises to the plastid. The protein resides in the chloroplast. This Oedogonium cardiacum (Filamentous green alga) protein is Large ribosomal subunit protein uL16c.